The following is a 455-amino-acid chain: Hexokinase-2 (455 aa).

The 443-residue stretch at Ala3–Leu445 folds into the Hexokinase domain. Residues Thr57–Ile195 form a hexokinase small subdomain region. Asp68–Asn73 lines the ATP pocket. Substrate-binding positions include Ser144–Tyr145, Thr161–Lys162, and Asn196–Asp197. The hexokinase large subdomain stretch occupies residues Asn196–Asp434. Residue Thr222 coordinates ATP. Positions 225, 252, and 283 each coordinate substrate. ATP-binding positions include Gly288–Met289, Thr325–Ser329, and Ser400–His404.

It belongs to the hexokinase family. In terms of assembly, monomer.

It carries out the reaction a D-hexose + ATP = a D-hexose 6-phosphate + ADP + H(+). The enzyme catalyses D-mannose + ATP = D-mannose 6-phosphate + ADP + H(+). The catalysed reaction is D-fructose + ATP = D-fructose 6-phosphate + ADP + H(+). It catalyses the reaction D-glucose + ATP = D-glucose 6-phosphate + ADP + H(+). Its pathway is carbohydrate metabolism; hexose metabolism. It participates in carbohydrate degradation; glycolysis; D-glyceraldehyde 3-phosphate and glycerone phosphate from D-glucose: step 1/4. Catalyzes the phosphorylation of hexose (six-carbon sugars) to hexose 6-phosphate. Phosphorylates D-glucose, D-fructose and D-mannose. Compared to hxk1, has a much higher affinity for D-glucose. Constitutes the initial enzyme of glycolysis by catalyzing the phosphorylation of glucose to D-glucose 6-phosphate. This Schizosaccharomyces pombe (strain 972 / ATCC 24843) (Fission yeast) protein is Hexokinase-2.